The primary structure comprises 452 residues: tRNA modification GTPase MnmE (452 aa).

(6S)-5-formyl-5,6,7,8-tetrahydrofolate contacts are provided by R21, E78, and K118. The region spanning 214 to 375 (GMKVVIAGRP…LREHLKQSMG (162 aa)) is the TrmE-type G domain. N224 is a binding site for K(+). GTP-binding positions include 224-229 (NAGKSS), 243-249 (TDIAGTT), 268-271 (DTAG), and 333-336 (NKAD). Residue S228 coordinates Mg(2+). T243, I245, and T248 together coordinate K(+). A Mg(2+)-binding site is contributed by T249. K452 lines the (6S)-5-formyl-5,6,7,8-tetrahydrofolate pocket.

This sequence belongs to the TRAFAC class TrmE-Era-EngA-EngB-Septin-like GTPase superfamily. TrmE GTPase family. In terms of assembly, homodimer. Heterotetramer of two MnmE and two MnmG subunits. K(+) serves as cofactor.

Its subcellular location is the cytoplasm. Functionally, exhibits a very high intrinsic GTPase hydrolysis rate. Involved in the addition of a carboxymethylaminomethyl (cmnm) group at the wobble position (U34) of certain tRNAs, forming tRNA-cmnm(5)s(2)U34. This Pasteurella multocida (strain Pm70) protein is tRNA modification GTPase MnmE.